Consider the following 94-residue polypeptide: MTKSELMEKLSAKQPTLPAKEIENMVKDILEFISQSLENGDRVEVRGFGSFSLHHRQPRLGRNPKTGDSVNLSAKSVPYFKAGKELKARVDVQA.

This sequence belongs to the bacterial histone-like protein family. As to quaternary structure, heterodimer of an alpha and a beta chain.

Functionally, this protein is one of the two subunits of integration host factor, a specific DNA-binding protein that functions in genetic recombination as well as in transcriptional and translational control. The sequence is that of Integration host factor subunit beta from Haemophilus influenzae (strain PittGG).